A 567-amino-acid polypeptide reads, in one-letter code: Urease subunit alpha 1 (567 aa).

The region spanning 128–567 is the Urease domain; sequence GAVDTHVHYI…LPLAQLYHLF (440 aa). Ni(2+) contacts are provided by His-133, His-135, and Lys-216. An N6-carboxylysine modification is found at Lys-216. His-218 lines the substrate pocket. Ni(2+) is bound by residues His-245 and His-271. The active-site Proton donor is the His-319. Asp-359 is a Ni(2+) binding site.

Belongs to the metallo-dependent hydrolases superfamily. Urease alpha subunit family. As to quaternary structure, heterotrimer of UreA (gamma), UreB (beta) and UreC (alpha) subunits. Three heterotrimers associate to form the active enzyme. It depends on Ni cation as a cofactor. In terms of processing, carboxylation allows a single lysine to coordinate two nickel ions.

It is found in the cytoplasm. It catalyses the reaction urea + 2 H2O + H(+) = hydrogencarbonate + 2 NH4(+). It participates in nitrogen metabolism; urea degradation; CO(2) and NH(3) from urea (urease route): step 1/1. The polypeptide is Urease subunit alpha 1 (Psychrobacter cryohalolentis (strain ATCC BAA-1226 / DSM 17306 / VKM B-2378 / K5)).